The chain runs to 259 residues: Transmembrane protein 81 (259 aa).

The first 18 residues, 1-18, serve as a signal peptide directing secretion; sequence MALSTLWLVLMLWTSLFS. The Extracellular portion of the chain corresponds to 19 to 221; the sequence is DSQCSTLSQA…KVYSSSTIRN (203 aa). The 76-residue stretch at 97 to 172 folds into the Ig-like domain; sequence GRRLVLDCLE…VLDTGKRRVK (76 aa). Cysteine 104 and cysteine 161 form a disulfide bridge. Residues 222-242 form a helical membrane-spanning segment; it reads IVIISVPLSFAIAVVIFIFLF. At 243 to 259 the chain is on the cytoplasmic side; that stretch reads CYSRRARRAAHLCQDNI.

As to quaternary structure, forms a complex with izumo1 and spaca6 on spermatocyte cell membrane. The complex binds to oocyte protein bncr. In terms of tissue distribution, expressed in sperm.

The protein localises to the cell membrane. Functionally, essential fertilization factor required for male fertility. Part of a conserved trimeric sperm complex with the essential fertilization factors IZUMO1 and SPACA6 which bridges sperm and oocyte membranes during fertilization by binding to IZUMO1R/JUNO on the oocyte. This is Transmembrane protein 81 from Danio rerio (Zebrafish).